Reading from the N-terminus, the 148-residue chain is Deoxyuridine 5'-triphosphate nucleotidohydrolase (148 aa).

Substrate contacts are provided by residues Arg-67–Gly-69, Asn-80, Leu-84–Asp-86, and Met-94.

It belongs to the dUTPase family. Mg(2+) serves as cofactor.

It catalyses the reaction dUTP + H2O = dUMP + diphosphate + H(+). It participates in pyrimidine metabolism; dUMP biosynthesis; dUMP from dCTP (dUTP route): step 2/2. This enzyme is involved in nucleotide metabolism: it produces dUMP, the immediate precursor of thymidine nucleotides and it decreases the intracellular concentration of dUTP so that uracil cannot be incorporated into DNA. The sequence is that of Deoxyuridine 5'-triphosphate nucleotidohydrolase from Burkholderia ambifaria (strain MC40-6).